A 415-amino-acid chain; its full sequence is Lipoyl synthase, mitochondrial (415 aa).

A mitochondrion-targeting transit peptide spans 1-32 (MAVSTSHFRSLCASSRSLSRTGIVAPISCRGY). Residues 30–50 (RGYATTEPSPSATSTTTTTTA) form a disordered region. Residues 33 to 49 (ATTEPSPSATSTTTTTT) show a composition bias toward low complexity. Cys132, Cys137, Cys143, Cys163, Cys167, Cys170, and Ser378 together coordinate [4Fe-4S] cluster. Residues 146–367 (GSDKSAATAT…RQRALDMGFL (222 aa)) enclose the Radical SAM core domain.

It belongs to the radical SAM superfamily. Lipoyl synthase family. [4Fe-4S] cluster serves as cofactor.

Its subcellular location is the mitochondrion. It carries out the reaction [[Fe-S] cluster scaffold protein carrying a second [4Fe-4S](2+) cluster] + N(6)-octanoyl-L-lysyl-[protein] + 2 oxidized [2Fe-2S]-[ferredoxin] + 2 S-adenosyl-L-methionine + 4 H(+) = [[Fe-S] cluster scaffold protein] + N(6)-[(R)-dihydrolipoyl]-L-lysyl-[protein] + 4 Fe(3+) + 2 hydrogen sulfide + 2 5'-deoxyadenosine + 2 L-methionine + 2 reduced [2Fe-2S]-[ferredoxin]. It functions in the pathway protein modification; protein lipoylation via endogenous pathway; protein N(6)-(lipoyl)lysine from octanoyl-[acyl-carrier-protein]: step 2/2. In terms of biological role, catalyzes the radical-mediated insertion of two sulfur atoms into the C-6 and C-8 positions of the octanoyl moiety bound to the lipoyl domains of lipoate-dependent enzymes, thereby converting the octanoylated domains into lipoylated derivatives. This is Lipoyl synthase, mitochondrial from Neosartorya fischeri (strain ATCC 1020 / DSM 3700 / CBS 544.65 / FGSC A1164 / JCM 1740 / NRRL 181 / WB 181) (Aspergillus fischerianus).